Reading from the N-terminus, the 140-residue chain is Calcitonin (140 aa).

Residues 1 to 25 (MGFWKFSPFLPLSILVLYQVGIIQA) form the signal peptide. A propeptide spanning residues 26-81 (APFRSALESLPDPAVLPEEESRLLLAALVKDYVQMKVRALEQEQETGGASLDSPRA) is cleaved from the precursor. A disulfide bridge connects residues cysteine 84 and cysteine 90. Proline 115 carries the post-translational modification Proline amide. The propeptide occupies 120 to 140 (VMARGLERDHGPHIGTSQDAY).

The protein belongs to the calcitonin family.

It localises to the secreted. Its function is as follows. Calcitonin is a peptide hormone that causes a rapid but short-lived drop in the level of calcium and phosphate in blood by promoting the incorporation of those ions in the bones. Calcitonin function is mediated by the calcitonin receptor/CALCR and the CALCR-RAMP2 (AMYR2) receptor complex. This chain is Calcitonin (CALCA), found in Equus caballus (Horse).